The sequence spans 497 residues: Bifunctional protein GlmU (497 aa).

The interval 1–243 is pyrophosphorylase; the sequence is MTSSTTSSTD…SALVAGVNDR (243 aa). Residues 16–19, Lys30, Gln87, and 92–93 contribute to the UDP-N-acetyl-alpha-D-glucosamine site; these read LAAG and GT. Asp118 is a Mg(2+) binding site. UDP-N-acetyl-alpha-D-glucosamine contacts are provided by Gly153, Glu168, Asn183, and Asn241. A Mg(2+)-binding site is contributed by Asn241. A linker region spans residues 244–264; it reads VQLAALGAELNRRIVTAHQRA. The interval 265-497 is N-acetyltransferase; the sequence is GVTVIDPGST…LGHHDDSQGS (233 aa). UDP-N-acetyl-alpha-D-glucosamine contacts are provided by Arg346 and Lys364. His376 (proton acceptor) is an active-site residue. Tyr379 and Asn390 together coordinate UDP-N-acetyl-alpha-D-glucosamine. Residues Ala393, 399 to 400, Ser418, and Ala436 contribute to the acetyl-CoA site; that span reads NY. Positions 473–497 are disordered; that stretch reads ARAAERASGEAAEQALGHHDDSQGS. Residues 488 to 497 are compositionally biased toward basic and acidic residues; sequence LGHHDDSQGS.

In the N-terminal section; belongs to the N-acetylglucosamine-1-phosphate uridyltransferase family. The protein in the C-terminal section; belongs to the transferase hexapeptide repeat family. In terms of assembly, homotrimer. Mg(2+) serves as cofactor.

Its subcellular location is the cytoplasm. The catalysed reaction is alpha-D-glucosamine 1-phosphate + acetyl-CoA = N-acetyl-alpha-D-glucosamine 1-phosphate + CoA + H(+). The enzyme catalyses N-acetyl-alpha-D-glucosamine 1-phosphate + UTP + H(+) = UDP-N-acetyl-alpha-D-glucosamine + diphosphate. It functions in the pathway nucleotide-sugar biosynthesis; UDP-N-acetyl-alpha-D-glucosamine biosynthesis; N-acetyl-alpha-D-glucosamine 1-phosphate from alpha-D-glucosamine 6-phosphate (route II): step 2/2. It participates in nucleotide-sugar biosynthesis; UDP-N-acetyl-alpha-D-glucosamine biosynthesis; UDP-N-acetyl-alpha-D-glucosamine from N-acetyl-alpha-D-glucosamine 1-phosphate: step 1/1. The protein operates within bacterial outer membrane biogenesis; LPS lipid A biosynthesis. Catalyzes the last two sequential reactions in the de novo biosynthetic pathway for UDP-N-acetylglucosamine (UDP-GlcNAc). The C-terminal domain catalyzes the transfer of acetyl group from acetyl coenzyme A to glucosamine-1-phosphate (GlcN-1-P) to produce N-acetylglucosamine-1-phosphate (GlcNAc-1-P), which is converted into UDP-GlcNAc by the transfer of uridine 5-monophosphate (from uridine 5-triphosphate), a reaction catalyzed by the N-terminal domain. The chain is Bifunctional protein GlmU from Mycobacterium sp. (strain JLS).